The chain runs to 580 residues: High affinity choline transporter 1 (580 aa).

The Extracellular portion of the chain corresponds to Met-1–Glu-6. The chain crosses the membrane as a helical span at residues Gly-7–Trp-27. Residues Lys-28–Asp-48 lie on the Cytoplasmic side of the membrane. A helical transmembrane segment spans residues Ile-49–Asn-69. Over Gly-70–Gly-81 the chain is Extracellular. A helical membrane pass occupies residues Leu-82–Phe-102. Residues Ala-103–Arg-125 are Cytoplasmic-facing. Residues Met-126–Phe-146 form a helical membrane-spanning segment. The Extracellular portion of the chain corresponds to Ser-147–Ser-164. A helical transmembrane segment spans residues Val-165–Ala-185. Residues Tyr-186 to Gln-191 lie on the Cytoplasmic side of the membrane. A helical transmembrane segment spans residues Leu-192–Val-212. At Thr-213–Val-237 the chain is on the extracellular side. A helical transmembrane segment spans residues Tyr-238 to Phe-258. Over Gln-259–Ser-274 the chain is Cytoplasmic. The chain crosses the membrane as a helical span at residues Phe-275 to Gly-295. Residues Ala-296–Asp-317 are Extracellular-facing. N-linked (GlcNAc...) asparagine glycosylation is present at Asn-301. The chain crosses the membrane as a helical span at residues Met-318–Gly-338. Topologically, residues Ala-339–Glu-376 are cytoplasmic. Residues Ile-377–Leu-397 traverse the membrane as a helical segment. At Leu-398–Trp-406 the chain is on the extracellular side. Residues Tyr-407–Ile-427 form a helical membrane-spanning segment. The Cytoplasmic portion of the chain corresponds to Lys-428–Ala-435. The helical transmembrane segment at Val-436 to Leu-456 threads the bilayer. Topologically, residues Gln-457–Thr-481 are extracellular. Residues Leu-482 to Phe-502 form a helical membrane-spanning segment. Residues Phe-502 to Gln-580 are mediates interaction with SEC14L1. Over Glu-503–Gln-580 the chain is Cytoplasmic. The Dileucine-like motif motif lies at Asp-527–Val-532.

It belongs to the sodium:solute symporter (SSF) (TC 2.A.21) family. As to quaternary structure, homooligomerizes at cell surface. Interacts with SEC14L1; may regulate SLC5A7. Post-translationally, phosphorylated by PKC and dephosphorylated by PP1/PP2A. Found in spinal cord, brain-stem, mid-brain and striatum. Specific for cholinergic neurons.

The protein resides in the presynaptic cell membrane. Its subcellular location is the cell projection. It localises to the axon. The protein localises to the early endosome membrane. It is found in the cytoplasmic vesicle. The protein resides in the secretory vesicle. Its subcellular location is the synaptic vesicle membrane. It carries out the reaction choline(out) + n Na(+)(out) = choline(in) + n Na(+)(in). Its activity is regulated as follows. Choline uptake activity is regulated by SLC5A7/CHT1 internalization (inactive form) from the cell surface and recycling of internalized SLC5A7/CHT1 into the cell surface (active form). Activated by extracellular chloride ion. Specifically inhibited by nanomolar concentrations of hemicholinium 3. High-affinity Na(+)-coupled choline transmembrane symporter. Functions as an electrogenic, voltage-dependent transporter with variable charge/choline stoichiometry. Choline uptake and choline-induced current is also Cl(-)-dependent where Cl(-) is likely a regulatory ion rather than cotransported ion. Plays a critical role in acetylcholine (ACh) synthesis by taking up the substrate choline from the synaptic cleft into the presynaptic nerve terminals after neurotransmitter release. SLC5A7/CHT1-mediated choline high-affinity transport in cholinergic neurons is the rate-limiting step for production of ACh, thereby facilitating communication by subsequent action potentials. Localized predominantly in presynaptic terminal intracellular organelles, and translocated to the plasma membrane in active form in response to neuronal activity. The sequence is that of High affinity choline transporter 1 from Mus musculus (Mouse).